Consider the following 601-residue polypeptide: Proteasome-associated ATPase (601 aa).

Gly residues predominate over residues 1-15; it reads MSGPRSGSGSGGSTG. The tract at residues 1-29 is disordered; it reads MSGPRSGSGSGGSTGRPGDADSQRSAYEK. Positions 18-29 are enriched in basic and acidic residues; it reads GDADSQRSAYEK. The stretch at 19–106 forms a coiled coil; the sequence is DADSQRSAYE…LKEEVDRLAQ (88 aa). 289-294 lines the ATP pocket; it reads GCGKTL. Residues 600-601 are docks into pockets in the proteasome alpha-ring; the sequence is YL.

The protein belongs to the AAA ATPase family. Homohexamer. Assembles into a hexameric ring structure that caps the 20S proteasome core. Strongly interacts with the prokaryotic ubiquitin-like protein Pup through a hydrophobic interface; the interacting region of ARC lies in its N-terminal coiled-coil domain. There is one Pup binding site per ARC hexamer ring. Upon ATP-binding, the C-terminus of ARC interacts with the alpha-rings of the proteasome core, possibly by binding to the intersubunit pockets.

The protein operates within protein degradation; proteasomal Pup-dependent pathway. Its function is as follows. ATPase which is responsible for recognizing, binding, unfolding and translocation of pupylated proteins into the bacterial 20S proteasome core particle. May be essential for opening the gate of the 20S proteasome via an interaction with its C-terminus, thereby allowing substrate entry and access to the site of proteolysis. Thus, the C-termini of the proteasomal ATPase may function like a 'key in a lock' to induce gate opening and therefore regulate proteolysis. The polypeptide is Proteasome-associated ATPase (Parafrankia sp. (strain EAN1pec)).